Reading from the N-terminus, the 38-residue chain is Kappa-actitoxin-Bcs3a (38 aa).

In terms of domain architecture, ShKT spans 2–37 (CIDRFPTGTCKHVKKGGSCKNSQKYRINCAKTCGLC). Cystine bridges form between Cys2/Cys37, Cys11/Cys30, and Cys20/Cys34. The interval 25–26 (KY) is crucial for binding to potassium channels.

It belongs to the sea anemone type 1 potassium channel toxin family. Type 1b subfamily.

The protein localises to the secreted. The protein resides in the nematocyst. Functionally, inhibits voltage-gated potassium channels (IC(50)=405.0 nM for rKCNA1/Kv1.1, IC(50)=0.03 nM for rKCNA2/Kv1.2, IC(50)=1.31 nM for rKCNA6/Kv1.6, IC(50)=74.11 nM for hKCNA3/Kv1.3, and IC(50)=247.69 nM for insect Shaker IR). Binds the Shaker IR channels in a voltage-independent manner. This Bunodosoma caissarum (Sea anemone) protein is Kappa-actitoxin-Bcs3a.